The sequence spans 277 residues: Undecaprenyl-diphosphatase (277 aa).

The next 8 membrane-spanning stretches (helical) occupy residues 11-31 (WWQA…PISS), 47-67 (AGAS…LIYF), 96-116 (VGIL…KAIW), 123-143 (LWVI…AEQT), 153-173 (LGIW…IPGV), 197-217 (SFLL…ISEF), 227-247 (LGTL…IQFL), and 254-274 (LFIV…ALGF).

This sequence belongs to the UppP family.

The protein resides in the cell inner membrane. The enzyme catalyses di-trans,octa-cis-undecaprenyl diphosphate + H2O = di-trans,octa-cis-undecaprenyl phosphate + phosphate + H(+). Functionally, catalyzes the dephosphorylation of undecaprenyl diphosphate (UPP). Confers resistance to bacitracin. In Synechococcus sp. (strain JA-2-3B'a(2-13)) (Cyanobacteria bacterium Yellowstone B-Prime), this protein is Undecaprenyl-diphosphatase.